The chain runs to 137 residues: Large ribosomal subunit protein bL17 (137 aa).

The protein belongs to the bacterial ribosomal protein bL17 family. As to quaternary structure, part of the 50S ribosomal subunit. Contacts protein L32.

This chain is Large ribosomal subunit protein bL17, found in Caulobacter vibrioides (strain ATCC 19089 / CIP 103742 / CB 15) (Caulobacter crescentus).